A 294-amino-acid polypeptide reads, in one-letter code: Nucleotide-binding protein LVIS_0651 (294 aa).

Residue 12-19 participates in ATP binding; that stretch reads GMSGAGKT. Position 62 to 65 (62 to 65) interacts with GTP; it reads DLRS.

It belongs to the RapZ-like family.

Functionally, displays ATPase and GTPase activities. The chain is Nucleotide-binding protein LVIS_0651 from Levilactobacillus brevis (strain ATCC 367 / BCRC 12310 / CIP 105137 / JCM 1170 / LMG 11437 / NCIMB 947 / NCTC 947) (Lactobacillus brevis).